The primary structure comprises 189 residues: Blue copper protein (189 aa).

Positions 1-24 (MAFSNALVLCFLLAIINMALPSLA) are cleaved as a signal peptide. Residues 25 to 124 (TVYTVGDTSG…GMKLSIKVKA (100 aa)) enclose the Phytocyanin domain. Cu cation-binding residues include His-65, Cys-106, and His-111. Cysteines 78 and 106 form a disulfide. The segment covering 127-160 (GSSAAPSATPSSSGKGSPSSDDTPAATTTTTTPT) has biased composition (low complexity). Positions 127–165 (GSSAAPSATPSSSGKGSPSSDDTPAATTTTTTPTKQNES) are disordered. An N-linked (GlcNAc...) asparagine glycan is attached at Asn-163.

The sequence is that of Blue copper protein from Pisum sativum (Garden pea).